A 240-amino-acid polypeptide reads, in one-letter code: Triosephosphate isomerase (240 aa).

Residue 8-10 (NWK) participates in substrate binding. H93 (electrophile) is an active-site residue. E160 functions as the Proton acceptor in the catalytic mechanism. G166 serves as a coordination point for substrate.

It belongs to the triosephosphate isomerase family. Homodimer.

The protein localises to the cytoplasm. It carries out the reaction D-glyceraldehyde 3-phosphate = dihydroxyacetone phosphate. Its pathway is carbohydrate biosynthesis; gluconeogenesis. It functions in the pathway carbohydrate degradation; glycolysis; D-glyceraldehyde 3-phosphate from glycerone phosphate: step 1/1. Functionally, involved in the gluconeogenesis. Catalyzes stereospecifically the conversion of dihydroxyacetone phosphate (DHAP) to D-glyceraldehyde-3-phosphate (G3P). The chain is Triosephosphate isomerase from Ehrlichia chaffeensis (strain ATCC CRL-10679 / Arkansas).